Consider the following 432-residue polypeptide: Carbohydrate esterase MZ0003 (432 aa).

The N-terminal stretch at 1-25 is a signal peptide; the sequence is MQRTCVLIVLIVTSTMWTPDPDVYA. The GXSYXG catalytic site motif signature appears at 266–271; it reads GHSRLG. Ser-268 serves as the catalytic Nucleophile. Substrate-binding residues include Lys-272 and Trp-359. His-409 acts as the Charge relay system in catalysis.

The protein belongs to the carbohydrate esterase 15 (CE15) family. Does not require metal ions for activity. serves as cofactor.

The protein resides in the periplasm. Is inhibited by PMSF and by NaF in vitro, which is consistent with the catalytic nucleophile being a serine. In terms of biological role, displays some glucuronoyl esterase activity in vitro, since it is able to hydrolyze methyl 4-O-methyl-D-glucopyranosyluronate, allyl D-glucuronate, benzyl D-glucuronate and D-glucuronic acid methyl ester. However, esters of glucuronic acid are probably not its biological substrate, as they are not present in the marine environment. Can also hydrolyze a range of other esters, including p-nitrophenyl acetate. More likely biologically-relevant substrates for MZ0003 and other marine bacterial CE15s are algal cell wall polysaccharides, as these would be readily available in this environment and could be used as energy sources. In Unknown prokaryotic organism, this protein is Carbohydrate esterase MZ0003.